A 42-amino-acid chain; its full sequence is Mating-type M-specific polypeptide Mi (42 aa).

The protein localises to the cytoplasm. The protein resides in the nucleus. Its function is as follows. Mating type proteins are sequence specific DNA-binding proteins that act as master switches in yeast differentiation by controlling gene expression in a cell type-specific fashion. Required for meiosis, but plays no role in conjugation. This Schizosaccharomyces pombe (strain 972 / ATCC 24843) (Fission yeast) protein is Mating-type M-specific polypeptide Mi (mat1-Mi).